Here is a 194-residue protein sequence, read N- to C-terminus: MADIPATSEGSANTSEAVVEYQQPTPEFLQRKIYFLVDQLRTYHSELPENLQTRISYDLLTELANCVLNDGIFVIVKALMELQHETERHLIKIRMQAENEYEIEVAEWRSKIKDPEELRHILGLMKIKHTKKLHESDTKIIEILDQKVNDQQSTLQKAGVPGFYVTENPKEIKIQMFLLDFILRLSRLKYEPGK.

The protein belongs to the gonadal family. In terms of tissue distribution, in stage 6-14 egg chamber nurse cells and oocytes of adult females and spermatocyte cysts and bundles of maturing sperm of larval, pupal and adult males.

The chain is Gonadal protein gdl (gdl) from Drosophila melanogaster (Fruit fly).